A 551-amino-acid polypeptide reads, in one-letter code: GMP synthase [glutamine-hydrolyzing] (551 aa).

The region spanning 40-233 (KILIVDFGSQ…VRKIAGLTGD (194 aa)) is the Glutamine amidotransferase type-1 domain. Catalysis depends on cysteine 117, which acts as the Nucleophile. Active-site residues include histidine 207 and glutamate 209. One can recognise a GMPS ATP-PPase domain in the interval 234-426 (WTMRAFREEE…LGLPEIFVGR (193 aa)). Position 261-267 (261-267 (SGGVDSA)) interacts with ATP.

As to quaternary structure, homodimer.

The catalysed reaction is XMP + L-glutamine + ATP + H2O = GMP + L-glutamate + AMP + diphosphate + 2 H(+). Its pathway is purine metabolism; GMP biosynthesis; GMP from XMP (L-Gln route): step 1/1. Catalyzes the synthesis of GMP from XMP. This Bradyrhizobium diazoefficiens (strain JCM 10833 / BCRC 13528 / IAM 13628 / NBRC 14792 / USDA 110) protein is GMP synthase [glutamine-hydrolyzing].